Consider the following 179-residue polypeptide: Large ribosomal subunit protein uL5 (179 aa).

The protein belongs to the universal ribosomal protein uL5 family. Part of the 50S ribosomal subunit; part of the 5S rRNA/L5/L18/L25 subcomplex. Contacts the 5S rRNA and the P site tRNA. Forms a bridge to the 30S subunit in the 70S ribosome.

This is one of the proteins that bind and probably mediate the attachment of the 5S RNA into the large ribosomal subunit, where it forms part of the central protuberance. In the 70S ribosome it contacts protein S13 of the 30S subunit (bridge B1b), connecting the 2 subunits; this bridge is implicated in subunit movement. Contacts the P site tRNA; the 5S rRNA and some of its associated proteins might help stabilize positioning of ribosome-bound tRNAs. The chain is Large ribosomal subunit protein uL5 from Desulfosudis oleivorans (strain DSM 6200 / JCM 39069 / Hxd3) (Desulfococcus oleovorans).